A 391-amino-acid polypeptide reads, in one-letter code: Steroid side-chain-cleaving aldolase (391 aa).

The active-site Proton acceptor is the Tyr294. Tyr344 (proton donor) is an active-site residue.

It belongs to the thiolase-like superfamily. Homodimer. Interacts with the ChsH1/ChsH2 hydratase via the DUF35 C-terminal region of ChsH2 (ChsH2-DUF35).

The catalysed reaction is 17-hydroxy-3-oxochol-4-en-22-oyl-CoA = androst-4-ene-3,17-dione + propanoyl-CoA. In terms of biological role, probably involved in bile acid degradation. In vitro, when associated with the ChsH1/ChsH2 hydratase, catalyzes the retroaldol cleavage of 17-hydroxy-3-oxo-4-pregnene-20-carboxyl-CoA (17-HOPC-CoA), forming androst-4-ene-3,17-dione and propionyl-CoA. The in vivo substrate is probably a closely analogous bile acid degradation metabolite. The sequence is that of Steroid side-chain-cleaving aldolase from Thermomonospora curvata (strain ATCC 19995 / DSM 43183 / JCM 3096 / KCTC 9072 / NBRC 15933 / NCIMB 10081 / Henssen B9).